The sequence spans 266 residues: Protein STAY-GREEN homolog, chloroplastic (266 aa).

A chloroplast-targeting transit peptide spans 1 to 50 (MGTLTASLVAPSKLNPEKHSSLFVYKTRRKSHKNQSIVPVARLFGPAIFE).

This sequence belongs to the staygreen family.

The protein resides in the plastid. It localises to the chloroplast. In terms of biological role, required to trigger chlorophyll degradation during leaf senescence and fruit ripening. This Capsicum annuum (Capsicum pepper) protein is Protein STAY-GREEN homolog, chloroplastic.